A 1299-amino-acid chain; its full sequence is Cilia- and flagella-associated protein 251 (1299 aa).

Residues 1–351 (MSDTEENPLE…SQKPEDILAQ (351 aa)) form a disordered region. 3 stretches are compositionally biased toward acidic residues: residues 17–45 (EMEE…EEEE), 91–162 (EKEE…EEDA), and 176–189 (ESQE…EWVE). Basic and acidic residues predominate over residues 190–199 (KEEQREGEEV). Over residues 212-228 (EEEGWEEEKSGEEEKSE) the composition is skewed to acidic residues. Over residues 229 to 257 (ESERSKERGGEEEGQEKEEAEHEGEREEG) the composition is skewed to basic and acidic residues. Acidic residues predominate over residues 269-280 (REEEEEEEDTET). Basic and acidic residues-rich tracts occupy residues 281–297 (TETK…EKQN) and 331–351 (NSMK…ILAQ). WD repeat units follow at residues 484–526 (PVHT…IWKW), 534–574 (ACTL…CWFE), 585–624 (VLTE…VWDI), 643–678 (PRKL…FYDH), 681–741 (SVVN…VYHM), 745–785 (GTKL…VWDF), 791–828 (LFSR…ILDA), 838–874 (PFKY…MVVV), 881–924 (WEYL…EYNL), 935–975 (LDVH…LFNA), 981–1027 (RKTL…ILPV), 1033–1071 (KTCA…QWKI), 1109–1149 (YFYY…FYPS), and 1169–1209 (GKLI…GYTN).

The protein resides in the cytoplasm. It is found in the cytoskeleton. Its subcellular location is the cilium axoneme. It localises to the cell projection. The protein localises to the cilium. The protein resides in the flagellum. In terms of biological role, involved in spermatozoa motility. May also regulate cilium motility through its role in the assembly of the axonemal radial spokes. This chain is Cilia- and flagella-associated protein 251, found in Mus musculus (Mouse).